The following is a 412-amino-acid chain: Tyrosine--tRNA ligase (412 aa).

An L-tyrosine-binding site is contributed by Tyr-31. The 'HIGH' region motif lies at 36-45 (PTAPSLHIGH). L-tyrosine is bound by residues Tyr-162 and Gln-166. Positions 222–226 (KIGKT) match the 'KMSKS' region motif. ATP is bound at residue Lys-225. The S4 RNA-binding domain occupies 345–411 (KRWLDIVVEL…GKRKKQVIDL (67 aa)).

The protein belongs to the class-I aminoacyl-tRNA synthetase family. TyrS type 1 subfamily. In terms of assembly, homodimer.

It localises to the cytoplasm. It catalyses the reaction tRNA(Tyr) + L-tyrosine + ATP = L-tyrosyl-tRNA(Tyr) + AMP + diphosphate + H(+). Functionally, catalyzes the attachment of tyrosine to tRNA(Tyr) in a two-step reaction: tyrosine is first activated by ATP to form Tyr-AMP and then transferred to the acceptor end of tRNA(Tyr). The sequence is that of Tyrosine--tRNA ligase from Chlamydia trachomatis serovar L2 (strain ATCC VR-902B / DSM 19102 / 434/Bu).